A 525-amino-acid chain; its full sequence is Transmembrane protein 184C (525 aa).

A run of 7 helical transmembrane segments spans residues 17–37 (LLVL…IWKF), 48–68 (SWFI…WGIL), 83–103 (IIRI…ALVY), 121–141 (VIYN…PNLI), 212–232 (YLVI…LLFY), 254–274 (VVFV…LGVI), and 287–307 (AVAT…AAIA). Disordered stretches follow at residues 358-394 (PKKK…PSPG) and 483-525 (LFPS…STDP). A compositionally biased stretch (low complexity) spans 373-388 (SSLLSSSSQDLTSGSS). A compositionally biased stretch (polar residues) spans 483-502 (LFPSTETSENSMIDTSESQQ). The span at 503–525 (ESSDLCTESSDSSTESSDLSTDP) shows a compositional bias: low complexity.

It belongs to the TMEM184 family.

The protein localises to the membrane. Functionally, possible tumor suppressor which may play a role in cell growth. The sequence is that of Transmembrane protein 184C (Tmem184c) from Mus musculus (Mouse).